The sequence spans 105 residues: Small ribosomal subunit protein uS10 (105 aa).

Belongs to the universal ribosomal protein uS10 family. As to quaternary structure, part of the 30S ribosomal subunit.

Functionally, involved in the binding of tRNA to the ribosomes. This Synechococcus sp. (strain JA-2-3B'a(2-13)) (Cyanobacteria bacterium Yellowstone B-Prime) protein is Small ribosomal subunit protein uS10.